The chain runs to 274 residues: Large ribosomal subunit protein uL2 (274 aa).

Positions 214–274 are disordered; it reads LGRRPRTRPV…NKYIVERRKK (61 aa).

This sequence belongs to the universal ribosomal protein uL2 family. In terms of assembly, part of the 50S ribosomal subunit. Forms a bridge to the 30S subunit in the 70S ribosome.

Functionally, one of the primary rRNA binding proteins. Required for association of the 30S and 50S subunits to form the 70S ribosome, for tRNA binding and peptide bond formation. It has been suggested to have peptidyltransferase activity; this is somewhat controversial. Makes several contacts with the 16S rRNA in the 70S ribosome. In Flavobacterium johnsoniae (strain ATCC 17061 / DSM 2064 / JCM 8514 / BCRC 14874 / CCUG 350202 / NBRC 14942 / NCIMB 11054 / UW101) (Cytophaga johnsonae), this protein is Large ribosomal subunit protein uL2.